The primary structure comprises 1157 residues: Probable inactive leucine-rich repeat receptor kinase XIAO (1157 aa).

An N-terminal signal peptide occupies residues 1–21; sequence MPPPPRLLFLLVMLLVVAAPG. Asn-58 is a glycosylation site (N-linked (GlcNAc...) asparagine). LRR repeat units follow at residues 101-125, 127-149, 150-172, 173-196, 198-220, 221-245, 247-269, 270-293, 296-319, 320-343, 344-367, 368-391, 393-414, 415-439, 440-463, 464-487, 489-511, 513-536, 537-559, 561-583, 584-608, 609-631, 632-656, 658-680, 681-704, and 706-728; these read LVYL…LSRI, SLRA…FLAN, LTNL…VSFP, PSLK…VSAS, TSLQ…SLGT, LQDL…LSNC, ALLH…VAAI, PSLQ…AFGG, NSSL…VSLG, KDLQ…LAGA, GGLT…VGQL, TALQ…IGRC, ALQV…ALGG, LRRL…LGNL, SWLE…LFVL, GNLT…IGNL, ALQS…IGNL, NLRV…LFGL, PQLQ…GFSS, WSLR…TYGY, LPSL…LANC, SNLT…DFAR, LGEL…ISNC, SLVT…LSNL, SKLQ…LAQI, and GMLS…LGSR. Residue Asn-149 is glycosylated (N-linked (GlcNAc...) asparagine). N-linked (GlcNAc...) asparagine glycans are attached at residues Asn-192, Asn-204, and Asn-244. N-linked (GlcNAc...) asparagine glycosylation is present at Asn-296. An N-linked (GlcNAc...) asparagine glycan is attached at Asn-438. 3 N-linked (GlcNAc...) asparagine glycosylation sites follow: Asn-465, Asn-494, and Asn-524. Asn-567, Asn-607, Asn-610, Asn-655, Asn-679, Asn-692, and Asn-711 each carry an N-linked (GlcNAc...) asparagine glycan. The chain crosses the membrane as a helical span at residues 765–785; sequence LALLIGVVAATVLLLVLFCCC. The segment at 804 to 825 is disordered; the sequence is VKKRRRSPGRGSGSSGTSTDSV. The Protein kinase domain occupies 849–1144; it reads FDEENVLSRG…LEGCRVGPDI (296 aa). ATP contacts are provided by residues 855–863, 930–932, 936–939, 980–985, and Asp-998; these read LSRGRHGLV, DYM, NLAT, and DVKPQN.

This sequence belongs to the protein kinase superfamily. Ser/Thr protein kinase family. As to expression, expressed in developing culm, coleoptile, primary root, young spikelet, young leaf blade and leaf sheath, floral meristem primordia, stamen primordia, and lemma and palea primordia.

Its subcellular location is the cell membrane. In terms of biological role, functions in the early stages of organ development by regulating cell division rate. Is probably involved in the regulation of a number of cell-cycle genes. May act as regulator of brassinosteroid (BR) signaling and cell-cycle controlling organ growth. This chain is Probable inactive leucine-rich repeat receptor kinase XIAO, found in Oryza sativa subsp. japonica (Rice).